The sequence spans 149 residues: Large ribosomal subunit protein bL9 (149 aa).

The protein belongs to the bacterial ribosomal protein bL9 family.

Its function is as follows. Binds to the 23S rRNA. The protein is Large ribosomal subunit protein bL9 of Thermotoga maritima (strain ATCC 43589 / DSM 3109 / JCM 10099 / NBRC 100826 / MSB8).